A 395-amino-acid chain; its full sequence is Phosphoglycerate kinase (395 aa).

Substrate is bound by residues 21–23 (DLN), arginine 36, 59–62 (HLGR), arginine 113, and arginine 146. ATP-binding positions include lysine 197, glutamate 324, and 350–353 (GGDT).

Belongs to the phosphoglycerate kinase family. Monomer.

The protein localises to the cytoplasm. It catalyses the reaction (2R)-3-phosphoglycerate + ATP = (2R)-3-phospho-glyceroyl phosphate + ADP. It participates in carbohydrate degradation; glycolysis; pyruvate from D-glyceraldehyde 3-phosphate: step 2/5. The chain is Phosphoglycerate kinase from Acinetobacter baumannii (strain AB307-0294).